The following is a 174-amino-acid chain: Small ribosomal subunit protein uS5 (174 aa).

The S5 DRBM domain occupies 17–80 (WQERVVQIRR…ADGKKHLIDV (64 aa)).

It belongs to the universal ribosomal protein uS5 family. Part of the 30S ribosomal subunit. Contacts proteins S4 and S8.

With S4 and S12 plays an important role in translational accuracy. In terms of biological role, located at the back of the 30S subunit body where it stabilizes the conformation of the head with respect to the body. This is Small ribosomal subunit protein uS5 from Thermosynechococcus vestitus (strain NIES-2133 / IAM M-273 / BP-1).